The primary structure comprises 123 residues: Nitrogen regulatory protein GlnK2 (123 aa).

ATP is bound by residues 38-40 (SLT) and serine 49. Position 49 (serine 49) interacts with ADP. Tyrosine 62 carries the O-UMP-tyrosine modification. ATP is bound by residues valine 75, 98–101 (GDGK), and arginine 114. Residue 98–101 (GDGK) participates in ADP binding. 98-101 (GDGK) is a binding site for AMP.

The protein belongs to the P(II) protein family. As to quaternary structure, homotrimer. Interacts with the glutamine synthetase 3 (GS3) in the presence of 2-oxoglutarate. Interacts in vitro with Amt1 after ammonium shock. May also interact with Amt2. Post-translationally, uridylylated on Tyr-62.

The protein localises to the cytoplasm. With respect to regulation, binds the effectors ADP and ATP. Also binds AMP with high affinity, raising the possibility that AMP could be an important PII effector, at least in archaea. The change in the ATP/AMP ratio may be more relevant for describing the energy status in the cells than the ATP/ADP ratio alone. Functionally, involved in the regulation of nitrogen metabolism. Regulates the activity of its targets by protein-protein interaction in response to the nitrogen status of the cell. Increases the activity of the glutamine synthetase 3 in the presence of 2-oxoglutarate. May regulate the activity of the ammonia channel Amt2 via direct interaction. This Haloferax mediterranei (strain ATCC 33500 / DSM 1411 / JCM 8866 / NBRC 14739 / NCIMB 2177 / R-4) (Halobacterium mediterranei) protein is Nitrogen regulatory protein GlnK2.